Reading from the N-terminus, the 144-residue chain is L-fucose mutarotase (144 aa).

Histidine 22 serves as the catalytic Proton donor. Substrate is bound by residues aspartate 30, arginine 109, and 131-133 (YGN).

This sequence belongs to the RbsD / FucU family. FucU mutarotase subfamily. In terms of assembly, homodecamer.

The protein localises to the cytoplasm. It carries out the reaction alpha-L-fucose = beta-L-fucose. The protein operates within carbohydrate metabolism; L-fucose metabolism. Functionally, involved in the anomeric conversion of L-fucose. The sequence is that of L-fucose mutarotase from Actinobacillus pleuropneumoniae serotype 5b (strain L20).